Consider the following 202-residue polypeptide: Large ribosomal subunit protein bL25 (202 aa).

It belongs to the bacterial ribosomal protein bL25 family. CTC subfamily. In terms of assembly, part of the 50S ribosomal subunit; part of the 5S rRNA/L5/L18/L25 subcomplex. Contacts the 5S rRNA. Binds to the 5S rRNA independently of L5 and L18.

Its function is as follows. This is one of the proteins that binds to the 5S RNA in the ribosome where it forms part of the central protuberance. The protein is Large ribosomal subunit protein bL25 of Methylococcus capsulatus (strain ATCC 33009 / NCIMB 11132 / Bath).